Here is a 500-residue protein sequence, read N- to C-terminus: L-arabinose isomerase (500 aa).

Mn(2+) is bound by residues glutamate 306, glutamate 333, histidine 350, and histidine 450.

The protein belongs to the arabinose isomerase family. As to quaternary structure, homohexamer. The cofactor is Mn(2+).

It catalyses the reaction beta-L-arabinopyranose = L-ribulose. It participates in carbohydrate degradation; L-arabinose degradation via L-ribulose; D-xylulose 5-phosphate from L-arabinose (bacterial route): step 1/3. Catalyzes the conversion of L-arabinose to L-ribulose. This chain is L-arabinose isomerase, found in Salmonella enteritidis PT4 (strain P125109).